An 873-amino-acid polypeptide reads, in one-letter code: Protein SEY1 (873 aa).

Residues M1–E20 are disordered. Residues M1–Q749 lie on the Cytoplasmic side of the membrane. In terms of domain architecture, GB1/RHD3-type G spans G49–A307. G59–S66 lines the GTP pocket. Residues S482 to E506 adopt a coiled-coil conformation. The tract at residues D677 to D703 is disordered. Acidic residues predominate over residues A690–D703. Residues V750–L770 form a helical membrane-spanning segment. The Lumenal segment spans residues R771–P773. Residues V774 to L794 traverse the membrane as a helical segment. Residues W795–F873 lie on the Cytoplasmic side of the membrane. The disordered stretch occupies residues R828–F873. Positions A839–D863 are enriched in basic and acidic residues. Positions E864–F873 are enriched in acidic residues.

The protein belongs to the TRAFAC class dynamin-like GTPase superfamily. GB1/RHD3 GTPase family. RHD3 subfamily.

It localises to the endoplasmic reticulum membrane. Functionally, cooperates with the reticulon proteins and tubule-shaping DP1 family proteins to generate and maintain the structure of the tubular endoplasmic reticulum network. Has GTPase activity, which is required for its function in ER organization. The sequence is that of Protein SEY1 from Ajellomyces capsulatus (strain NAm1 / WU24) (Darling's disease fungus).